Consider the following 154-residue polypeptide: MRCPFCGNENTRVIDTRAAEDGFAIKRRRECENCSKRFTTYERLDDRPLIVVKKDGSKQLFDKHKIYTGLLKACEKRPIAESKLLEIAEEIERELKNRLEQEVTSLEIGEMVMSRLKKLDEVAYVRFASVYRQFKDVNSFLEELKKLLNGGENS.

Residues 3 to 34 fold into a zinc finger; it reads CPFCGNENTRVIDTRAAEDGFAIKRRRECENC. An ATP-cone domain is found at 49 to 139; the sequence is LIVVKKDGSK…VYRQFKDVNS (91 aa).

The protein belongs to the NrdR family. It depends on Zn(2+) as a cofactor.

Negatively regulates transcription of bacterial ribonucleotide reductase nrd genes and operons by binding to NrdR-boxes. The polypeptide is Transcriptional repressor NrdR (Carboxydothermus hydrogenoformans (strain ATCC BAA-161 / DSM 6008 / Z-2901)).